The chain runs to 507 residues: Light-independent protochlorophyllide reductase subunit B (507 aa).

Residue D36 coordinates [4Fe-4S] cluster. The Proton donor role is filled by D293. 428 to 429 lines the substrate pocket; sequence GM.

Belongs to the ChlB/BchB/BchZ family. In terms of assembly, protochlorophyllide reductase is composed of three subunits; ChlL, ChlN and ChlB. Forms a heterotetramer of two ChlB and two ChlN subunits. [4Fe-4S] cluster serves as cofactor.

It localises to the plastid. Its subcellular location is the chloroplast. It catalyses the reaction chlorophyllide a + oxidized 2[4Fe-4S]-[ferredoxin] + 2 ADP + 2 phosphate = protochlorophyllide a + reduced 2[4Fe-4S]-[ferredoxin] + 2 ATP + 2 H2O. It participates in porphyrin-containing compound metabolism; chlorophyll biosynthesis (light-independent). Functionally, component of the dark-operative protochlorophyllide reductase (DPOR) that uses Mg-ATP and reduced ferredoxin to reduce ring D of protochlorophyllide (Pchlide) to form chlorophyllide a (Chlide). This reaction is light-independent. The NB-protein (ChlN-ChlB) is the catalytic component of the complex. The sequence is that of Light-independent protochlorophyllide reductase subunit B from Porphyra purpurea (Red seaweed).